A 192-amino-acid chain; its full sequence is Fe/S biogenesis protein NfuA (192 aa).

[4Fe-4S] cluster is bound by residues Cys-149 and Cys-152.

This sequence belongs to the NfuA family. In terms of assembly, homodimer. [4Fe-4S] cluster is required as a cofactor.

Its function is as follows. Involved in iron-sulfur cluster biogenesis. Binds a 4Fe-4S cluster, can transfer this cluster to apoproteins, and thereby intervenes in the maturation of Fe/S proteins. Could also act as a scaffold/chaperone for damaged Fe/S proteins. The chain is Fe/S biogenesis protein NfuA from Alteromonas mediterranea (strain DSM 17117 / CIP 110805 / LMG 28347 / Deep ecotype).